Reading from the N-terminus, the 456-residue chain is Bifunctional protein GlmU (456 aa).

Residues 1-229 (MYNCAIILAA…FEETMGVNSR (229 aa)) form a pyrophosphorylase region. Residues 8–11 (LAAG), K22, Q73, and 78–79 (GT) contribute to the UDP-N-acetyl-alpha-D-glucosamine site. D103 contributes to the Mg(2+) binding site. 4 residues coordinate UDP-N-acetyl-alpha-D-glucosamine: G140, E155, N170, and N227. N227 serves as a coordination point for Mg(2+). Positions 230-250 (VQLAEAEKIMRNRINKIHMEN) are linker. The N-acetyltransferase stretch occupies residues 251–456 (GVTLIDHNNT…SWVYKKGLKK (206 aa)). Residues R332 and K350 each contribute to the UDP-N-acetyl-alpha-D-glucosamine site. The Proton acceptor role is filled by H362. Residues Y365 and N376 each coordinate UDP-N-acetyl-alpha-D-glucosamine. Acetyl-CoA-binding positions include 385–386 (NY), A422, and R439.

It in the N-terminal section; belongs to the N-acetylglucosamine-1-phosphate uridyltransferase family. The protein in the C-terminal section; belongs to the transferase hexapeptide repeat family. In terms of assembly, homotrimer. It depends on Mg(2+) as a cofactor.

It is found in the cytoplasm. The catalysed reaction is alpha-D-glucosamine 1-phosphate + acetyl-CoA = N-acetyl-alpha-D-glucosamine 1-phosphate + CoA + H(+). It carries out the reaction N-acetyl-alpha-D-glucosamine 1-phosphate + UTP + H(+) = UDP-N-acetyl-alpha-D-glucosamine + diphosphate. It functions in the pathway nucleotide-sugar biosynthesis; UDP-N-acetyl-alpha-D-glucosamine biosynthesis; N-acetyl-alpha-D-glucosamine 1-phosphate from alpha-D-glucosamine 6-phosphate (route II): step 2/2. It participates in nucleotide-sugar biosynthesis; UDP-N-acetyl-alpha-D-glucosamine biosynthesis; UDP-N-acetyl-alpha-D-glucosamine from N-acetyl-alpha-D-glucosamine 1-phosphate: step 1/1. Its pathway is bacterial outer membrane biogenesis; LPS lipid A biosynthesis. Functionally, catalyzes the last two sequential reactions in the de novo biosynthetic pathway for UDP-N-acetylglucosamine (UDP-GlcNAc). The C-terminal domain catalyzes the transfer of acetyl group from acetyl coenzyme A to glucosamine-1-phosphate (GlcN-1-P) to produce N-acetylglucosamine-1-phosphate (GlcNAc-1-P), which is converted into UDP-GlcNAc by the transfer of uridine 5-monophosphate (from uridine 5-triphosphate), a reaction catalyzed by the N-terminal domain. The protein is Bifunctional protein GlmU of Clostridium kluyveri (strain NBRC 12016).